The following is a 399-amino-acid chain: PCI domain-containing protein 2 (399 aa).

Alanine 2 is modified (N-acetylalanine). Phosphoserine is present on serine 45. Residues 210–391 (ITYKYYVGRK…QKLVVSKQNP (182 aa)) enclose the PCI domain.

The protein belongs to the CSN12 family. Component of the nuclear pore complex (NPC)-associated TREX-2 complex (transcription and export complex 2), composed of at least GANP, 2 copies of ENY2, PCID2, SEM1/DSS1, and either centrin CETN2 or centrin CETN3. The TREX-2 complex also associates with ALYREF/ALY and with the nucleoporin NUP153. Interacts with BRCA2. Interacts with SRCAP chromatin remodeling complex component ZNHIT1; the interaction results in inhibition of SRCAP complex activity, preventing the deposition of histone variant H2AZ1/H2A.Z to lymphoid fate regulator genes and restricting lymphoid lineage commitment. In terms of tissue distribution, highly expressed in bone marrow and haematopoietic progenitor cells but is almost undetectable in mature blood cells.

The protein resides in the cytoplasm. It localises to the nucleus. Its subcellular location is the nuclear pore complex. Required for B-cell survival through the regulation of the expression of cell-cycle checkpoint MAD2L1 protein during B cell differentiation. As a component of the TREX-2 complex, involved in the export of mRNAs to the cytoplasm through the nuclear pores. Binds and stabilizes BRCA2 and is thus involved in the control of R-loop-associated DNA damage and transcription-associated genomic instability. Blocks the activity of the SRCAP chromatin remodeling complex by interacting with SRCAP complex member ZNHIT1 and inhibiting its interaction with the complex. This prevents the deposition of histone variant H2AZ1/H2A.Z at the nucleosomes of key lymphoid fate regulator genes which suppresses their expression and restricts lymphoid lineage commitment. This is PCI domain-containing protein 2 (Pcid2) from Mus musculus (Mouse).